We begin with the raw amino-acid sequence, 510 residues long: Kynurenine 3-monooxygenase (510 aa).

Belongs to the aromatic-ring hydroxylase family. KMO subfamily. FAD is required as a cofactor.

It is found in the mitochondrion outer membrane. The enzyme catalyses L-kynurenine + NADPH + O2 + H(+) = 3-hydroxy-L-kynurenine + NADP(+) + H2O. It functions in the pathway cofactor biosynthesis; NAD(+) biosynthesis; quinolinate from L-kynurenine: step 1/3. Functionally, catalyzes the hydroxylation of L-kynurenine (L-Kyn) to form 3-hydroxy-L-kynurenine (L-3OHKyn). Required for synthesis of quinolinic acid. The sequence is that of Kynurenine 3-monooxygenase (bna4) from Aspergillus oryzae (strain ATCC 42149 / RIB 40) (Yellow koji mold).